The chain runs to 116 residues: Non-specific lipid-transfer protein C, cotyledon-specific isoform (116 aa).

The first 24 residues, 1 to 24 (MKNVVFSVLLLLSFLFCLANTNEA), serve as a signal peptide directing secretion. Cystine bridges form between C28/C76, C38/C53, C54/C98, and C74/C112.

It belongs to the plant LTP family.

Plant non-specific lipid-transfer proteins transfer phospholipids as well as galactolipids across membranes. May play a role in wax or cutin deposition in the cell walls of expanding epidermal cells and certain secretory tissues. The protein is Non-specific lipid-transfer protein C, cotyledon-specific isoform of Ricinus communis (Castor bean).